We begin with the raw amino-acid sequence, 235 residues long: Uridylate kinase (235 aa).

An ATP-binding site is contributed by 9–12 (KLSG). Residues 17 to 22 (GKDGYG) are involved in allosteric activation by GTP. G51 contributes to the UMP binding site. ATP is bound by residues G52 and R56. Residues D71 and 132–139 (TGNPYFTT) contribute to the UMP site. Residues T159, Y165, and D168 each coordinate ATP.

The protein belongs to the UMP kinase family. In terms of assembly, homohexamer.

The protein resides in the cytoplasm. It carries out the reaction UMP + ATP = UDP + ADP. Its pathway is pyrimidine metabolism; CTP biosynthesis via de novo pathway; UDP from UMP (UMPK route): step 1/1. With respect to regulation, allosterically activated by GTP. Inhibited by UTP. Catalyzes the reversible phosphorylation of UMP to UDP. This Chlorobium luteolum (strain DSM 273 / BCRC 81028 / 2530) (Pelodictyon luteolum) protein is Uridylate kinase.